The primary structure comprises 208 residues: MVIAIDGPAASGKGTLARRLAAYYGLPHLDTGLLYRAVGAIVLAQGQLQDEAASVEAARTLDVATLDPEALRTAELGEAASVVAARGGVRAALLDLQHRFAAQPGGAVLDGRDIGTVICPKAQAKLFVTASPEVRAERRHRELIGRGEDVAYETVLADIRKRDERDSARAAAPLVQADDAVLLDTSALDIAQAFAAALAIVEARRAGR.

7–15 (GPAASGKGT) lines the ATP pocket.

The protein belongs to the cytidylate kinase family. Type 1 subfamily.

Its subcellular location is the cytoplasm. The catalysed reaction is CMP + ATP = CDP + ADP. It catalyses the reaction dCMP + ATP = dCDP + ADP. The polypeptide is Cytidylate kinase (Xanthobacter autotrophicus (strain ATCC BAA-1158 / Py2)).